The chain runs to 741 residues: Exostosin-1b (741 aa).

The Cytoplasmic segment spans residues 1–7 (MQAKKRY). Residues 8 to 28 (LISLLTGAFLVLLIYLGGGGV) form a helical; Signal-anchor for type II membrane protein membrane-spanning segment. Over 29 to 741 (PGPAAPGSRS…RKKYREIERL (713 aa)) the chain is Lumenal. N84 and N325 each carry an N-linked (GlcNAc...) asparagine glycan. 8 residues coordinate UDP-N-acetyl-alpha-D-glucosamine: R435, R544, D560, E561, D562, E648, D649, and R696. D562 is a Mn(2+) binding site. A disulfide bridge connects residues C647 and C699. D649 is an active-site residue.

It belongs to the glycosyltransferase 47 family. The cofactor is Mn(2+).

It localises to the endoplasmic reticulum membrane. The catalysed reaction is 3-O-{[(1-&gt;4)-beta-D-GlcA-(1-&gt;4)-alpha-D-GlcNAc](n)-(1-&gt;4)-beta-D-GlcA-(1-&gt;3)-beta-D-Gal-(1-&gt;3)-beta-D-Gal-(1-&gt;4)-beta-D-Xyl}-L-seryl-[protein] + UDP-N-acetyl-alpha-D-glucosamine = 3-O-{alpha-D-GlcNAc-[(1-&gt;4)-beta-D-GlcA-(1-&gt;4)-alpha-D-GlcNAc](n)-(1-&gt;4)-beta-D-GlcA-(1-&gt;3)-beta-D-Gal-(1-&gt;3)-beta-D-Gal-(1-&gt;4)-beta-D-Xyl}-L-seryl-[protein] + UDP + H(+). The enzyme catalyses 3-O-{alpha-D-GlcNAc-[(1-&gt;4)-beta-D-GlcA-(1-&gt;4)-alpha-D-GlcNAc](n)-(1-&gt;4)-beta-D-GlcA-(1-&gt;3)-beta-D-Gal-(1-&gt;3)-beta-D-Gal-(1-&gt;4)-beta-D-Xyl}-L-seryl-[protein] + UDP-alpha-D-glucuronate = 3-O-{[(1-&gt;4)-beta-D-GlcA-(1-&gt;4)-alpha-D-GlcNAc](n+1)-(1-&gt;4)-beta-D-GlcA-(1-&gt;3)-beta-D-Gal-(1-&gt;3)-beta-D-Gal-(1-&gt;4)-beta-D-Xyl}-L-seryl-[protein] + UDP + H(+). It functions in the pathway protein modification; protein glycosylation. Glycosyltransferase required for the biosynthesis of heparan-sulfate. The polypeptide is Exostosin-1b (ext1b) (Danio rerio (Zebrafish)).